The sequence spans 271 residues: Fatty acid elongase 2 (271 aa).

Residues 16–36 (WMIDNVDVAGFLCLLYLGLVW) traverse the membrane as a helical segment. Residue asparagine 52 is glycosylated (N-linked (GlcNAc...) asparagine). The next 2 membrane-spanning stretches (helical) occupy residues 59 to 79 (VFIM…IVVV) and 110 to 130 (FWVG…VLLV). The HxxHH motif signature appears at 140-144 (HWYHH). Histidine 143 serves as the catalytic Nucleophile. 3 consecutive transmembrane segments (helical) span residues 162-182 (IFVF…YFAM), 194-214 (IAPV…AVTM), and 241-261 (GVVM…ESYL).

Belongs to the ELO family.

The protein resides in the endoplasmic reticulum membrane. It catalyses the reaction an acyl-CoA + malonyl-CoA + H(+) = a 3-oxoacyl-CoA + CO2 + CoA. The protein operates within lipid metabolism; fatty acid biosynthesis. In terms of biological role, involved in the synthesis of fatty acids. Elongates C10 fatty acids to C14. This chain is Fatty acid elongase 2, found in Trypanosoma brucei brucei (strain 927/4 GUTat10.1).